A 139-amino-acid polypeptide reads, in one-letter code: Arsenate reductase (139 aa).

Catalysis depends on nucleophile residues C10, C82, and C89. Cystine bridges form between C10-C82 and C82-C89.

The protein belongs to the low molecular weight phosphotyrosine protein phosphatase family. Thioredoxin-coupled ArsC subfamily.

It is found in the cytoplasm. The catalysed reaction is arsenate + [thioredoxin]-dithiol + H(+) = arsenite + [thioredoxin]-disulfide + H2O. Catalyzes the reduction of arsenate [As(V)] to arsenite [As(III)]. This Shouchella clausii (strain KSM-K16) (Alkalihalobacillus clausii) protein is Arsenate reductase.